A 218-amino-acid chain; its full sequence is Ribose-5-phosphate isomerase A (218 aa).

Substrate-binding positions include Thr-28–Thr-31, Asp-81–Asp-84, and Lys-94–Gly-97. Glu-103 (proton acceptor) is an active-site residue. Residue Lys-121 coordinates substrate.

It belongs to the ribose 5-phosphate isomerase family. As to quaternary structure, homodimer.

The catalysed reaction is aldehydo-D-ribose 5-phosphate = D-ribulose 5-phosphate. It participates in carbohydrate degradation; pentose phosphate pathway; D-ribose 5-phosphate from D-ribulose 5-phosphate (non-oxidative stage): step 1/1. Functionally, catalyzes the reversible conversion of ribose-5-phosphate to ribulose 5-phosphate. The polypeptide is Ribose-5-phosphate isomerase A (Shewanella woodyi (strain ATCC 51908 / MS32)).